The primary structure comprises 24 residues: Ascaphin-3 (24 aa).

Expressed by the skin glands.

It is found in the secreted. Antimicrobial peptide that shows higher potency against Gram-negative bacteria than against Gram-positive bacteria. Has a very week hemolytic activity. The polypeptide is Ascaphin-3 (Ascaphus truei (Coastal tailed frog)).